The chain runs to 297 residues: Ribosome production factor 2 homolog (297 aa).

The Brix domain occupies 28 to 232 (KKALFCRGAK…VMRKKLADDA (205 aa)).

The protein belongs to the RPF2 family.

Its subcellular location is the nucleus. The protein localises to the nucleolus. The chain is Ribosome production factor 2 homolog from Caenorhabditis elegans.